The sequence spans 270 residues: 4-hydroxy-tetrahydrodipicolinate reductase (270 aa).

Residues 9–14 (GAGGRM) and E35 each bind NAD(+). R36 is an NADP(+) binding site. NAD(+)-binding positions include 99 to 101 (GTT) and 123 to 126 (ASNY). Residue H156 is the Proton donor/acceptor of the active site. (S)-2,3,4,5-tetrahydrodipicolinate is bound at residue H157. K160 (proton donor) is an active-site residue. Position 166–167 (166–167 (GT)) interacts with (S)-2,3,4,5-tetrahydrodipicolinate.

It belongs to the DapB family.

It localises to the cytoplasm. The catalysed reaction is (S)-2,3,4,5-tetrahydrodipicolinate + NAD(+) + H2O = (2S,4S)-4-hydroxy-2,3,4,5-tetrahydrodipicolinate + NADH + H(+). It catalyses the reaction (S)-2,3,4,5-tetrahydrodipicolinate + NADP(+) + H2O = (2S,4S)-4-hydroxy-2,3,4,5-tetrahydrodipicolinate + NADPH + H(+). The protein operates within amino-acid biosynthesis; L-lysine biosynthesis via DAP pathway; (S)-tetrahydrodipicolinate from L-aspartate: step 4/4. Functionally, catalyzes the conversion of 4-hydroxy-tetrahydrodipicolinate (HTPA) to tetrahydrodipicolinate. The sequence is that of 4-hydroxy-tetrahydrodipicolinate reductase from Mannheimia succiniciproducens (strain KCTC 0769BP / MBEL55E).